A 75-amino-acid chain; its full sequence is UPF0154 protein MMOB4450 (75 aa).

Residues 7 to 27 (IGLIVGLSILFTIVGLVVGFF) traverse the membrane as a helical segment.

It belongs to the UPF0154 family.

Its subcellular location is the cell membrane. The sequence is that of UPF0154 protein MMOB4450 from Mycoplasma mobile (strain ATCC 43663 / 163K / NCTC 11711) (Mesomycoplasma mobile).